We begin with the raw amino-acid sequence, 1988 residues long: Sodium channel protein type 9 subunit alpha (1988 aa).

Over 1 to 125 (MAMLPPPGPQ…RRISIKILVH (125 aa)) the chain is Cytoplasmic. Residues 26–39 (RIAERKSKEPKEEK) are compositionally biased toward basic and acidic residues. The disordered stretch occupies residues 26 to 55 (RIAERKSKEPKEEKKDDDEEAPKPSSDLEA). The stretch at 112–410 (FSPLRRISIK…VAMAYEEQNQ (299 aa)) is one I repeat. Residues 126-145 (SLFSMLIMCTILTNCIFMTM) form a helical membrane-spanning segment. Topologically, residues 146–150 (NNPPD) are extracellular. A helical transmembrane segment spans residues 151–172 (WTKNVEYTFTGIYTFESLVKIL). Topologically, residues 173 to 185 (ARGFCVGEFTFLR) are cytoplasmic. Residues 186 to 204 (DPWNWLDFVVIVFAYLTEF) form a helical membrane-spanning segment. Residues 205-210 (VNLGNV) lie on the Extracellular side of the membrane. N-linked (GlcNAc...) asparagine glycosylation is present at Asn-209. A helical transmembrane segment spans residues 211–227 (SALRTFRVLRALKTISV). At 228–241 (IPGLKTIVGALIQS) the chain is on the cytoplasmic side. Residues 242-267 (VKKLSDVMILTVFCLSVFALIGLQLF) traverse the membrane as a helical segment. Over 268 to 346 (MGNLKHKCFR…PDYGYTSFDT (79 aa)) the chain is Extracellular. A disulfide bridge links Cys-275 with Cys-324. Asn-283 carries an N-linked (GlcNAc...) asparagine glycan. Residues 347-363 (FSWAFLALFRLMTQDYW) constitute an intramembrane region (pore-forming). The Extracellular segment spans residues 364-376 (ENLYQQTLRAAGK). The helical transmembrane segment at 377-402 (TYMIFFVVVIFLGSFYLINLILAVVA) threads the bilayer. Residues 403-745 (MAYEEQNQAN…CIYFIVMDPF (343 aa)) are Cytoplasmic-facing. Low complexity predominate over residues 461–471 (SSSETSKLSSK). Disordered regions lie at residues 461–543 (SSSE…RGSL) and 565–611 (GSET…SPPM). Over residues 474–486 (KERRNRRKKKNQK) the composition is skewed to basic residues. Composition is skewed to basic and acidic residues over residues 489–510 (SSGE…DSIR) and 573–585 (DEHS…ESRR). Residues 726–989 (CSPYWIKFKK…EEDPDANNLQ (264 aa)) form an II repeat. A helical transmembrane segment spans residues 746-762 (VDLAITICIVLNTLFMA). Residues 763–771 (MEHHPMTEE) lie on the Extracellular side of the membrane. The chain crosses the membrane as a helical span at residues 772 to 796 (FKNVLAIGNLVFTGIFAAEMVLKLI). Residues 797-805 (AMDPYEYFQ) are Cytoplasmic-facing. A helical transmembrane segment spans residues 806–822 (VGWNIFDSLIVTLSLVE). Residues 823-831 (LFLADVEGL) lie on the Extracellular side of the membrane. The chain crosses the membrane as a helical span at residues 832–848 (SVLRSFRLLRVFKLAKS). Residues 849–865 (WPTLNMLIKIIGNSVGA) are Cytoplasmic-facing. Residues 866–888 (LGNLTLVLAIIVFIFAVVGMQLF) form a helical membrane-spanning segment. Topologically, residues 889–915 (GKSYKECVCKINDDCTLPRWHMNDFFH) are extracellular. Residues Cys-897 and Cys-903 are joined by a disulfide bond. The segment at residues 916–928 (SFLIVFRVLCGEW) is an intramembrane region (pore-forming). The Extracellular portion of the chain corresponds to 929 to 940 (IETMWDCMEVAG). The cysteines at positions 935 and 944 are disulfide-linked. The helical transmembrane segment at 941 to 967 (QAMCLIVYMMVMVIGNLVVLNLFLALL) threads the bilayer. The Cytoplasmic portion of the chain corresponds to 968-1187 (LSSFSSDNLT…WWNIRKTCYK (220 aa)). A disordered region spans residues 1102–1148 (NAEELSSDSDSEYSKVRLNRSSSSECSTVDNPLPGEGEEAEAEPMNS). A compositionally biased stretch (polar residues) spans 1120-1131 (NRSSSSECSTVD). The span at 1137–1148 (EGEEAEAEPMNS) shows a compositional bias: acidic residues. One copy of the III repeat lies at 1180–1488 (NIRKTCYKIV…KKYYNAMKKL (309 aa)). The chain crosses the membrane as a helical span at residues 1188 to 1212 (IVEHSWFESFIVLMILLSSGALAFE). Residues 1213 to 1224 (DIYIERKKTIKI) are Extracellular-facing. Residues 1225 to 1250 (ILEYADKIFTYIFILEMLLKWIAYGY) form a helical membrane-spanning segment. The Cytoplasmic portion of the chain corresponds to 1251-1252 (KT). Residues 1253–1278 (YFTNAWCWLDFLIVDVSLVTLVANTL) form a helical membrane-spanning segment. Residues 1279 to 1287 (GYSDLGPIK) are Extracellular-facing. Residues 1288–1304 (SLRTLRALRPLRALSRF) traverse the membrane as a helical segment. Residues 1305–1317 (EGMRVVVNALIGA) are Cytoplasmic-facing. The chain crosses the membrane as a helical span at residues 1318–1342 (IPSIMNVLLVCLIFWLIFSIMGVNL). Residues 1343–1394 (FAGKFYECINTTDGSRFPASQVPNRSECFALMNVSQNVRWKNLKVNFDNVGL) are Extracellular-facing. A disulfide bridge connects residues Cys-1350 and Cys-1370. Asn-1352, Asn-1366, and Asn-1375 each carry an N-linked (GlcNAc...) asparagine glycan. The pore-forming intramembrane region spans 1395 to 1405 (GYLSLLQVATF). The Extracellular segment spans residues 1406-1431 (KGWTIIMYAAVDSVNVDKQPKYEYSL). A helical membrane pass occupies residues 1432–1457 (YMYIYFVVFIIFGSFFTLNLFIGVII). Over 1458–1514 (DNFNQQKKKLGGQDIFMTEEQKKYYNAMKKLGSKKPQKPIPRPGNKIQGCIFDLVTN) the chain is Cytoplasmic. Residue Ser-1490 is modified to Phosphoserine; by PKC. Residues 1497 to 1795 (IPRPGNKIQG…WEKFDPDATQ (299 aa)) form an IV repeat. A helical membrane pass occupies residues 1515-1534 (QAFDISIMVLICLNMVTMMV). The Extracellular segment spans residues 1535-1545 (EKEGQSQHMTE). The chain crosses the membrane as a helical span at residues 1546–1567 (VLYWINVVFIILFTGECVLKLI). The Cytoplasmic segment spans residues 1568–1576 (SLRHYYFTV). The chain crosses the membrane as a helical span at residues 1577 to 1598 (GWNIFDFVVVIISIVGMFLADL). At 1599–1607 (IETYFVSPT) the chain is on the extracellular side. Residues 1608–1627 (LFRVIRLARIGRILRLVKGA) traverse the membrane as a helical segment. Over 1628–1640 (KGIRTLLFALMMS) the chain is Cytoplasmic. The helical transmembrane segment at 1641-1663 (LPALFNIGLLLFLVMFIYAIFGM) threads the bilayer. Topologically, residues 1664–1686 (SNFAYVKKEDGINDMFNFETFGN) are extracellular. Residues 1687–1699 (SMICLFQITTSAG) constitute an intramembrane region (pore-forming). At 1700–1733 (WDGLLAPILNSKPPDCDPKKVHPGSSVEGDCGNP) the chain is on the extracellular side. Cys-1715 and Cys-1730 are oxidised to a cystine. The chain crosses the membrane as a helical span at residues 1734-1759 (SVGIFYFVSYIIISFLVVVNMYIAVI). Residues 1760–1988 (LENFSVATEE…KGKDSKESKK (229 aa)) are Cytoplasmic-facing. An IQ domain is found at 1889–1918 (EDVSATVIQRAYRRYRLRQNVKNISSIYIK). Residues 1934-1988 (FDNVNENSSPEKTDATSSTTSPPSYDSVTKPDKEKYEQDRTEKEDKGKDSKESKK) form a disordered region. Residues 1948-1961 (ATSSTTSPPSYDSV) show a composition bias toward low complexity. Residues 1962–1988 (TKPDKEKYEQDRTEKEDKGKDSKESKK) are compositionally biased toward basic and acidic residues.

It belongs to the sodium channel (TC 1.A.1.10) family. Nav1.7/SCN9A subfamily. The Nav1.7 voltage-gated sodium channel consists of an ion-conducting alpha subunit SCN9A which is functional on its own regulated by one or more beta-1 (SCN1B), beta-2 (SCN2B), beta-3 (SCN3B) and beta-4 (SCN4B) subunits. SCN1B and SCN3B are non-covalently associated with SCN9A. SCN2B and SCN4B are disulfide-linked to SCN9A. SCN1B regulates channel inactivation. Interacts with NEDD4 and NEDD4L; regulates Nav1.7 activity most probably through ubiquitination and subsequent endocytosis. Interacts with TMEM233; modulates the gating properties of NaV1.7. In terms of processing, phosphorylation at Ser-1490 by PKC in a highly conserved cytoplasmic loop increases peak sodium currents. Ubiquitinated by NEDD4L; which may promote its endocytosis. In terms of tissue distribution, expressed strongly in dorsal root ganglion, with only minor levels elsewhere in the body, smooth muscle cells, MTC cell line and C-cell carcinoma. Also expressed in vagus nerves within the head and neck region. Isoform 1 is expressed preferentially in the central and peripheral nervous system. Isoform 2 is expressed preferentially in the dorsal root ganglion.

It localises to the cell membrane. Its subcellular location is the cell projection. The protein localises to the neuron projection. It is found in the axon. It catalyses the reaction Na(+)(in) = Na(+)(out). With respect to regulation, inhibited by tetrodotoxin. Weakly inhibited by saxitoxin. Inhibited by the spider huwentoxin-IV that binds the extracellular loop S3-S4 of repeat II. Inhibited by the spider protoxin-II that binds the extracellular loop S3-S4 of repeats II and IV. Inhibited by the scorpion alpha-toxins CvIV4 and AaH2. Inhibited by the conotoxin GVIIJ. Inhibited by the spider beta/delta-theraphotoxin-Pre1a. Pore-forming subunit of Nav1.7, a voltage-gated sodium (Nav) channel that directly mediates the depolarizing phase of action potentials in excitable membranes. Navs, also called VGSCs (voltage-gated sodium channels) or VDSCs (voltage-dependent sodium channels), operate by switching between closed and open conformations depending on the voltage difference across the membrane. In the open conformation they allow Na(+) ions to selectively pass through the pore, along their electrochemical gradient. The influx of Na(+) ions provokes membrane depolarization, initiating the propagation of electrical signals throughout cells and tissues. Nav1.7 plays a crucial role in controlling the excitability and action potential propagation from nociceptor neurons, thereby contributing to the sensory perception of pain. This chain is Sodium channel protein type 9 subunit alpha, found in Homo sapiens (Human).